Reading from the N-terminus, the 101-residue chain is uncharacterized protein (101 aa).

The chain crosses the membrane as a helical span at residues 17–37 (VIKILLISGISRIIILILAMF).

Its subcellular location is the endoplasmic reticulum membrane. This is an uncharacterized protein from Schizosaccharomyces pombe (strain 972 / ATCC 24843) (Fission yeast).